A 157-amino-acid polypeptide reads, in one-letter code: MPRRGTIERRIPPPDPRYNSVLVQQFINKVMQRGKKSIAEKIVYQAFDLAAQRLKKPALEIFETAVRNAGPVIEVKPRRVGGATYQVPVEVKSDRRQSLAMRWLLMSARARSGKPMYERLAAELIDAYNNTGATIKRKEDVQRMAEANRAFSHYGRF.

The protein belongs to the universal ribosomal protein uS7 family. As to quaternary structure, part of the 30S ribosomal subunit. Contacts proteins S9 and S11.

Functionally, one of the primary rRNA binding proteins, it binds directly to 16S rRNA where it nucleates assembly of the head domain of the 30S subunit. Is located at the subunit interface close to the decoding center, probably blocks exit of the E-site tRNA. The polypeptide is Small ribosomal subunit protein uS7 (Roseiflexus sp. (strain RS-1)).